Reading from the N-terminus, the 240-residue chain is Ubiquinone biosynthesis O-methyltransferase (240 aa).

S-adenosyl-L-methionine-binding residues include arginine 44, glycine 64, aspartate 85, and methionine 129.

It belongs to the methyltransferase superfamily. UbiG/COQ3 family.

It carries out the reaction a 3-demethylubiquinol + S-adenosyl-L-methionine = a ubiquinol + S-adenosyl-L-homocysteine + H(+). The enzyme catalyses a 3-(all-trans-polyprenyl)benzene-1,2-diol + S-adenosyl-L-methionine = a 2-methoxy-6-(all-trans-polyprenyl)phenol + S-adenosyl-L-homocysteine + H(+). It participates in cofactor biosynthesis; ubiquinone biosynthesis. O-methyltransferase that catalyzes the 2 O-methylation steps in the ubiquinone biosynthetic pathway. This is Ubiquinone biosynthesis O-methyltransferase from Escherichia coli (strain SMS-3-5 / SECEC).